Consider the following 165-residue polypeptide: SsrA-binding protein (165 aa).

Belongs to the SmpB family.

The protein localises to the cytoplasm. Required for rescue of stalled ribosomes mediated by trans-translation. Binds to transfer-messenger RNA (tmRNA), required for stable association of tmRNA with ribosomes. tmRNA and SmpB together mimic tRNA shape, replacing the anticodon stem-loop with SmpB. tmRNA is encoded by the ssrA gene; the 2 termini fold to resemble tRNA(Ala) and it encodes a 'tag peptide', a short internal open reading frame. During trans-translation Ala-aminoacylated tmRNA acts like a tRNA, entering the A-site of stalled ribosomes, displacing the stalled mRNA. The ribosome then switches to translate the ORF on the tmRNA; the nascent peptide is terminated with the 'tag peptide' encoded by the tmRNA and targeted for degradation. The ribosome is freed to recommence translation, which seems to be the essential function of trans-translation. The sequence is that of SsrA-binding protein from Prochlorococcus marinus (strain MIT 9515).